Here is a 508-residue protein sequence, read N- to C-terminus: Chromosomal replication initiator protein DnaA (508 aa).

The tract at residues 1–91 (MADDPGSSFT…TDALSRRLGQ (91 aa)) is domain I, interacts with DnaA modulators. The tract at residues 91-167 (QQIQLGVRIA…AIDPAVAAGT (77 aa)) is domain II. Residues 104–152 (DDVEDALIPSAEPFPDTDADLSARRRTDSRASGERGAVTNTQPGWTNYF) are disordered. Positions 124-136 (LSARRRTDSRASG) are enriched in basic and acidic residues. Polar residues predominate over residues 141-152 (VTNTQPGWTNYF). Positions 168-384 (SLNRRYTFDT…GALIRVTAFA (217 aa)) are domain III, AAA+ region. The ATP site is built by Gly212, Gly214, Lys215, and Thr216. The interval 385–508 (SLNKTPIDKS…TTRIRQRSKR (124 aa)) is domain IV, binds dsDNA.

The protein belongs to the DnaA family. As to quaternary structure, oligomerizes as a right-handed, spiral filament on DNA at oriC.

The protein localises to the cytoplasm. Functionally, plays an essential role in the initiation and regulation of chromosomal replication. ATP-DnaA binds to the origin of replication (oriC) to initiate formation of the DNA replication initiation complex once per cell cycle. Binds the DnaA box (a 9 base pair repeat at the origin) and separates the double-stranded (ds)DNA. Forms a right-handed helical filament on oriC DNA; dsDNA binds to the exterior of the filament while single-stranded (ss)DNA is stabiized in the filament's interior. The ATP-DnaA-oriC complex binds and stabilizes one strand of the AT-rich DNA unwinding element (DUE), permitting loading of DNA polymerase. After initiation quickly degrades to an ADP-DnaA complex that is not apt for DNA replication. Binds acidic phospholipids. This is Chromosomal replication initiator protein DnaA from Mycobacterium avium.